Here is a 78-residue protein sequence, read N- to C-terminus: Large ribosomal subunit protein bL28 (78 aa).

The interval 1–25 (MSRVCQVTGKRPAVGNNRSHAKNAT) is disordered.

This sequence belongs to the bacterial ribosomal protein bL28 family.

This is Large ribosomal subunit protein bL28 from Aliivibrio fischeri (strain ATCC 700601 / ES114) (Vibrio fischeri).